Consider the following 334-residue polypeptide: MKVIASAPAKVILFGEHSVVYGKPAIAAAIDLRTFVEAELIREKKIRIEAHDIKVPGLTVSFSENEIYFETDYGKAAEVLSYVREAINLVLEEADKKNVGIKVSITSQIPVGAGLGSSAAVAVATIGAVSKLLGLELSKEEIAKMGHKTELLVQGASSGIDPTVSAIGGFIFYEKGKFEHLPFMELPIVVGYTGSSGPTKELVAMVRKRYEEMPELIVPILEAMGKVVEKAKDVILSNVDKEEKFERLGVLMNINHGLLDALGVSTKKLSELVYAARVAGALGAKITGAGGGGCMYALAPNKQREVATAIRIAGGTPMITEISREGLKIEEVIK.

110-120 serves as a coordination point for ATP; sequence PVGAGLGSSAA. Asp-161 functions as the Proton acceptor in the catalytic mechanism.

It belongs to the GHMP kinase family. Mevalonate kinase subfamily. As to quaternary structure, homodimer. It depends on Mg(2+) as a cofactor.

It is found in the cytoplasm. It carries out the reaction (R)-mevalonate + ATP = (R)-5-phosphomevalonate + ADP + H(+). Its pathway is isoprenoid biosynthesis; isopentenyl diphosphate biosynthesis via mevalonate pathway; isopentenyl diphosphate from (R)-mevalonate: step 1/3. In terms of biological role, catalyzes the phosphorylation of (R)-mevalonate (MVA) to (R)-mevalonate 5-phosphate (MVAP). Functions in the mevalonate (MVA) pathway leading to isopentenyl diphosphate (IPP), a key precursor for the biosynthesis of isoprenoid compounds such as archaeal membrane lipids. The polypeptide is Mevalonate kinase (Pyrococcus furiosus (strain ATCC 43587 / DSM 3638 / JCM 8422 / Vc1)).